We begin with the raw amino-acid sequence, 66 residues long: MAYIIVHQRDPFPLLGVWIIVIIIVAVIGLLNQSPPERPYQTFKEDNSKIQYITIGGSTTTKVSTS.

A helical transmembrane segment spans residues 11 to 31 (PFPLLGVWIIVIIIVAVIGLL).

It is found in the membrane. This is an uncharacterized protein from Chenopodium amaranticolor (Quinoa).